The sequence spans 148 residues: Large ribosomal subunit protein bL9 (148 aa).

It belongs to the bacterial ribosomal protein bL9 family.

Binds to the 23S rRNA. The polypeptide is Large ribosomal subunit protein bL9 (Aliarcobacter butzleri (strain RM4018) (Arcobacter butzleri)).